The sequence spans 367 residues: MNVLEVMKRLDDMPESYKTMSMEEMEVRVRAIKERFGKRLFIPGHHYQKDEVIQFADATGDSLQLAQVAAQNSEAEYIVFCGVHFMAETADILTGDHQKVILPDMRAGCSMADMADITQVERAWPILQELFGDTILPLTYVNSTAAIKAFVGRRGGATVTSSNAKKMVEWAFTQKERIFFLPDQHLGRNTAYELGISLDEMAVWDPHTDRLEYKGDIKKVKVILWKGHCSVHENFTVRHIEYIRRTKPDMNIIVHPECSWDVVQQADYAGSTKYIIETIRNAPSGSKWAIGTEMNLVNRLMHEHPDKEIISLNPYMCPCLTMNRIDLPHLLWALESLERGEIVNQITVPPLIAKDAAQALARMLALA.

His-45 and Ser-62 together coordinate iminosuccinate. A [4Fe-4S] cluster-binding site is contributed by Cys-109. Iminosuccinate is bound by residues Tyr-140–Asn-142 and Ser-161. Cys-229 is a [4Fe-4S] cluster binding site. Iminosuccinate is bound by residues His-255–Glu-257 and Thr-272. Cys-319 contributes to the [4Fe-4S] cluster binding site.

The protein belongs to the quinolinate synthase family. Type 3 subfamily. Requires [4Fe-4S] cluster as cofactor.

The protein resides in the cytoplasm. The catalysed reaction is iminosuccinate + dihydroxyacetone phosphate = quinolinate + phosphate + 2 H2O + H(+). It participates in cofactor biosynthesis; NAD(+) biosynthesis; quinolinate from iminoaspartate: step 1/1. In terms of biological role, catalyzes the condensation of iminoaspartate with dihydroxyacetone phosphate to form quinolinate. The protein is Quinolinate synthase of Geobacillus sp. (strain WCH70).